The sequence spans 348 residues: Nicotinate-nucleotide--dimethylbenzimidazole phosphoribosyltransferase (348 aa).

Glutamate 316 acts as the Proton acceptor in catalysis.

The protein belongs to the CobT family.

The enzyme catalyses 5,6-dimethylbenzimidazole + nicotinate beta-D-ribonucleotide = alpha-ribazole 5'-phosphate + nicotinate + H(+). It participates in nucleoside biosynthesis; alpha-ribazole biosynthesis; alpha-ribazole from 5,6-dimethylbenzimidazole: step 1/2. In terms of biological role, catalyzes the synthesis of alpha-ribazole-5'-phosphate from nicotinate mononucleotide (NAMN) and 5,6-dimethylbenzimidazole (DMB). This is Nicotinate-nucleotide--dimethylbenzimidazole phosphoribosyltransferase from Xanthomonas campestris pv. campestris (strain 8004).